Reading from the N-terminus, the 259-residue chain is Phosphoadenosine 5'-phosphosulfate reductase (259 aa).

Cys244 serves as the catalytic Nucleophile; cysteine thiosulfonate intermediate.

It belongs to the PAPS reductase family. CysH subfamily.

Its subcellular location is the cytoplasm. The enzyme catalyses [thioredoxin]-disulfide + sulfite + adenosine 3',5'-bisphosphate + 2 H(+) = [thioredoxin]-dithiol + 3'-phosphoadenylyl sulfate. It functions in the pathway sulfur metabolism; hydrogen sulfide biosynthesis; sulfite from sulfate: step 3/3. In terms of biological role, catalyzes the formation of sulfite from phosphoadenosine 5'-phosphosulfate (PAPS) using thioredoxin as an electron donor. The chain is Phosphoadenosine 5'-phosphosulfate reductase from Vibrio parahaemolyticus serotype O3:K6 (strain RIMD 2210633).